Here is a 487-residue protein sequence, read N- to C-terminus: Glutamyl-tRNA(Gln) amidotransferase subunit A (487 aa).

K78 acts as the Charge relay system in catalysis. The segment covering 135 to 144 (SAYQTTTNPW) has biased composition (polar residues). The disordered stretch occupies residues 135–155 (SAYQTTTNPWDASRVPGGSSG). S153 (charge relay system) is an active-site residue. S177 functions as the Acyl-ester intermediate in the catalytic mechanism.

Belongs to the amidase family. GatA subfamily. Heterotrimer of A, B and C subunits.

The enzyme catalyses L-glutamyl-tRNA(Gln) + L-glutamine + ATP + H2O = L-glutaminyl-tRNA(Gln) + L-glutamate + ADP + phosphate + H(+). Functionally, allows the formation of correctly charged Gln-tRNA(Gln) through the transamidation of misacylated Glu-tRNA(Gln) in organisms which lack glutaminyl-tRNA synthetase. The reaction takes place in the presence of glutamine and ATP through an activated gamma-phospho-Glu-tRNA(Gln). This is Glutamyl-tRNA(Gln) amidotransferase subunit A from Maridesulfovibrio salexigens (strain ATCC 14822 / DSM 2638 / NCIMB 8403 / VKM B-1763) (Desulfovibrio salexigens).